Reading from the N-terminus, the 250-residue chain is Cellulose biosynthesis protein BcsQ (250 aa).

9 to 16 serves as a coordination point for ATP; the sequence is VRGGVGTT.

Belongs to the BcsQ family.

The protein resides in the cytoplasm. In terms of biological role, essential for cellulose biosynthesis, shown for strain 1094, a commensal, natural cellulose producer. Also shown in strain W3110 which has a restored reading frame (TAG stop codon to TTG for amino acid 6, called strain AR3110), this protein. May play a role in subcellular localization of an active cellulose biosynthesis apparatus at the bacterial cell pole. The combination of cellulose and the curli fiber network confer cohesion, elasticity and tissue-like properties to colonies. This is Cellulose biosynthesis protein BcsQ from Escherichia coli (strain K12).